The following is a 38-amino-acid chain: Potassium channel toxin alpha-KTx 2.3 (38 aa).

Cystine bridges form between Cys-7/Cys-29, Cys-13/Cys-34, and Cys-17/Cys-36.

Belongs to the short scorpion toxin superfamily. Potassium channel inhibitor family. Alpha-KTx 02 subfamily. In terms of tissue distribution, expressed by the venom gland.

It localises to the secreted. Its function is as follows. Inhibitor of voltage-gated potassium channels (Kv). It is capable of displacing the binding of radio-labeled noxiustoxin (AC P08815) to rat brain synaptosomes with high affinity (about 100 pM). It is also capable of inhibiting transient potassium-currents (resembling I(A)-type currents), in cultured rat cerebellar granule cells. About 50% of the peak currents are reduced by application of a 1.5 uM solution of this toxin. The protein is Potassium channel toxin alpha-KTx 2.3 of Centruroides limpidus (Mexican scorpion).